Here is a 714-residue protein sequence, read N- to C-terminus: Fatty acid oxidation complex subunit alpha (714 aa).

Positions 1-190 are enoyl-CoA hydratase; that stretch reads MEMASAFTLN…KLGLVDDVVP (190 aa). The tract at residues 306–714 is 3-hydroxyacyl-CoA dehydrogenase; sequence APLNSVGILG…FWKTTATDLQ (409 aa).

This sequence in the N-terminal section; belongs to the enoyl-CoA hydratase/isomerase family. In the central section; belongs to the 3-hydroxyacyl-CoA dehydrogenase family. Heterotetramer of two alpha chains (FadJ) and two beta chains (FadI).

The protein localises to the cytoplasm. It catalyses the reaction a (3S)-3-hydroxyacyl-CoA = a (2E)-enoyl-CoA + H2O. The enzyme catalyses a 4-saturated-(3S)-3-hydroxyacyl-CoA = a (3E)-enoyl-CoA + H2O. It carries out the reaction a (3S)-3-hydroxyacyl-CoA + NAD(+) = a 3-oxoacyl-CoA + NADH + H(+). The catalysed reaction is (3S)-3-hydroxybutanoyl-CoA = (3R)-3-hydroxybutanoyl-CoA. Its pathway is lipid metabolism; fatty acid beta-oxidation. Catalyzes the formation of a hydroxyacyl-CoA by addition of water on enoyl-CoA. Also exhibits 3-hydroxyacyl-CoA epimerase and 3-hydroxyacyl-CoA dehydrogenase activities. The chain is Fatty acid oxidation complex subunit alpha from Escherichia coli O9:H4 (strain HS).